Consider the following 423-residue polypeptide: Imidazolonepropionase (423 aa).

Residues His-78 and His-80 each contribute to the Fe(3+) site. Zn(2+) contacts are provided by His-78 and His-80. 4-imidazolone-5-propanoate is bound by residues Arg-87, Tyr-150, and His-183. N-formimidoyl-L-glutamate is bound at residue Tyr-150. His-247 lines the Fe(3+) pocket. His-247 contacts Zn(2+). Glu-250 is a binding site for 4-imidazolone-5-propanoate. Residue Asp-322 participates in Fe(3+) binding. A Zn(2+)-binding site is contributed by Asp-322. The N-formimidoyl-L-glutamate site is built by Asn-324 and Gly-326. Ser-327 contacts 4-imidazolone-5-propanoate.

It belongs to the metallo-dependent hydrolases superfamily. HutI family. Zn(2+) is required as a cofactor. It depends on Fe(3+) as a cofactor.

It localises to the cytoplasm. It carries out the reaction 4-imidazolone-5-propanoate + H2O = N-formimidoyl-L-glutamate. The protein operates within amino-acid degradation; L-histidine degradation into L-glutamate; N-formimidoyl-L-glutamate from L-histidine: step 3/3. In terms of biological role, catalyzes the hydrolytic cleavage of the carbon-nitrogen bond in imidazolone-5-propanoate to yield N-formimidoyl-L-glutamate. It is the third step in the universal histidine degradation pathway. The chain is Imidazolonepropionase from Bacillus cereus (strain G9842).